An 851-amino-acid polypeptide reads, in one-letter code: Protein NUD1 (851 aa).

Disordered regions lie at residues 1–31 and 216–352; these read MDMD…NAHS and LVGS…KAPS. Positions 8–21 are enriched in polar residues; sequence AELSSQLENLTINS. Composition is skewed to low complexity over residues 223–246 and 260–278; these read NSNN…INNK and SNSF…QTQS. The segment covering 291–304 has biased composition (polar residues); the sequence is NTISPGQLGYQFNH. Residues 320-333 are compositionally biased toward low complexity; that stretch reads SSSHSLDNTSSNQS. Lys-357 is covalently cross-linked (Glycyl lysine isopeptide (Lys-Gly) (interchain with G-Cter in ubiquitin)). A phosphothreonine mark is found at Thr-388 and Thr-392. Phosphoserine is present on residues Ser-417 and Ser-419. 5 LRR repeats span residues 544–566, 567–588, 589–609, 621–642, and 643–664; these read DLEC…SLCH, HLQE…GSSR, MKKL…EQLI, TVEV…NCLP, and RLKV…SKME.

Interacts directly with MPC54, CNM67, SPO21/MPC70, ADY3 and ADY4. Probable component of a spindle pole boby (SPB) complex composed of ADY3, SSP1, DON1, MPC54, SPO21/MPC70, NUD1 and CNM67. In terms of processing, phosphorylated from S/G2 phase until the end of mitosis.

The protein localises to the cytoplasm. It is found in the cytoskeleton. It localises to the microtubule organizing center. The protein resides in the spindle pole body. Its subcellular location is the nucleus envelope. Functionally, involved in astral microtubule organization by binding SCP72 to the outer plaque in a cell-cycle dependent manner. Required for the mitotic exit by facilitating the binding of TEMP1 to CDC15. Also involved in the pathway that organizes the shaping and sizing of the prospore membrane (PSM) during sporulation. The polypeptide is Protein NUD1 (NUD1) (Saccharomyces cerevisiae (strain ATCC 204508 / S288c) (Baker's yeast)).